A 115-amino-acid polypeptide reads, in one-letter code: Phosphoribosyl-AMP cyclohydrolase (115 aa).

Residue Asp-80 participates in Mg(2+) binding. Cys-81 contacts Zn(2+). Residues Asp-82 and Asp-84 each coordinate Mg(2+). Zn(2+) contacts are provided by Cys-97 and Cys-104.

This sequence belongs to the PRA-CH family. As to quaternary structure, homodimer. Requires Mg(2+) as cofactor. The cofactor is Zn(2+).

The protein resides in the cytoplasm. It carries out the reaction 1-(5-phospho-beta-D-ribosyl)-5'-AMP + H2O = 1-(5-phospho-beta-D-ribosyl)-5-[(5-phospho-beta-D-ribosylamino)methylideneamino]imidazole-4-carboxamide. Its pathway is amino-acid biosynthesis; L-histidine biosynthesis; L-histidine from 5-phospho-alpha-D-ribose 1-diphosphate: step 3/9. In terms of biological role, catalyzes the hydrolysis of the adenine ring of phosphoribosyl-AMP. This is Phosphoribosyl-AMP cyclohydrolase from Mycobacterium avium (strain 104).